Here is a 364-residue protein sequence, read N- to C-terminus: Fructose-1,6-bisphosphatase class 1 2 (364 aa).

Positions 101, 123, 125, and 126 each coordinate Mg(2+). Substrate is bound by residues 126-129 (DGSS) and asparagine 218. Glutamate 290 provides a ligand contact to Mg(2+).

It belongs to the FBPase class 1 family. In terms of assembly, homotetramer. The cofactor is Mg(2+).

It localises to the cytoplasm. It carries out the reaction beta-D-fructose 1,6-bisphosphate + H2O = beta-D-fructose 6-phosphate + phosphate. Its pathway is carbohydrate biosynthesis; gluconeogenesis. The sequence is that of Fructose-1,6-bisphosphatase class 1 2 from Cupriavidus taiwanensis (strain DSM 17343 / BCRC 17206 / CCUG 44338 / CIP 107171 / LMG 19424 / R1) (Ralstonia taiwanensis (strain LMG 19424)).